Consider the following 175-residue polypeptide: Bifunctional protein PyrR (175 aa).

Substrate-binding positions include 40–41 (TR), 102–110 (DDVLYTGRT), Arg-135, and Val-159. The PRPP-binding signature appears at 98-110 (VIIIDDVLYTGRT).

This sequence belongs to the purine/pyrimidine phosphoribosyltransferase family. PyrR subfamily. In terms of assembly, homodimer and homohexamer; in equilibrium.

The catalysed reaction is UMP + diphosphate = 5-phospho-alpha-D-ribose 1-diphosphate + uracil. In terms of biological role, regulates transcriptional attenuation of the pyrimidine nucleotide (pyr) operon by binding in a uridine-dependent manner to specific sites on pyr mRNA. This disrupts an antiterminator hairpin in the RNA and favors formation of a downstream transcription terminator, leading to a reduced expression of downstream genes. Its function is as follows. Also displays a weak uracil phosphoribosyltransferase activity which is not physiologically significant. This is Bifunctional protein PyrR from Staphylococcus aureus (strain MSSA476).